A 443-amino-acid polypeptide reads, in one-letter code: 23S rRNA (uracil(1939)-C(5))-methyltransferase RlmD (443 aa).

The 59-residue stretch at Arg-10–Arg-68 folds into the TRAM domain. [4Fe-4S] cluster is bound by residues Cys-81, Cys-87, Cys-90, and Cys-168. 6 residues coordinate S-adenosyl-L-methionine: Gln-271, Phe-300, Asn-305, Glu-321, Asn-348, and Asp-369. Catalysis depends on Cys-395, which acts as the Nucleophile.

This sequence belongs to the class I-like SAM-binding methyltransferase superfamily. RNA M5U methyltransferase family. RlmD subfamily.

The enzyme catalyses uridine(1939) in 23S rRNA + S-adenosyl-L-methionine = 5-methyluridine(1939) in 23S rRNA + S-adenosyl-L-homocysteine + H(+). Functionally, catalyzes the formation of 5-methyl-uridine at position 1939 (m5U1939) in 23S rRNA. The protein is 23S rRNA (uracil(1939)-C(5))-methyltransferase RlmD of Yersinia enterocolitica serotype O:8 / biotype 1B (strain NCTC 13174 / 8081).